A 146-amino-acid chain; its full sequence is Large ribosomal subunit protein uL15 (146 aa).

Residues 1-58 form a disordered region; that stretch reads MNLSNLRAPKKANRNRKRVGRGMGSGHGKTSTRGHKGQRSRSGSRSMRGFEGGQMPLH. Composition is skewed to basic residues over residues 8 to 20 and 30 to 39; these read APKK…KRVG and TSTRGHKGQR. The span at 40-49 shows a compositional bias: low complexity; sequence SRSGSRSMRG.

This sequence belongs to the universal ribosomal protein uL15 family. Part of the 50S ribosomal subunit.

Its function is as follows. Binds to the 23S rRNA. This chain is Large ribosomal subunit protein uL15, found in Acidobacterium capsulatum (strain ATCC 51196 / DSM 11244 / BCRC 80197 / JCM 7670 / NBRC 15755 / NCIMB 13165 / 161).